Consider the following 398-residue polypeptide: Leucine aminopeptidase 1 (398 aa).

The signal sequence occupies residues 1–20 (MKFLQTSLIAAALPAALVSG). Positions 21 to 87 (RFVIENEGDN…LRAWTQSQAS (67 aa)) are excised as a propeptide. Asparagine 179 carries an N-linked (GlcNAc...) asparagine glycan. Zn(2+) is bound by residues histidine 187, aspartate 206, glutamate 245, and aspartate 272. Cysteine 321 and cysteine 325 are disulfide-bonded. Histidine 354 provides a ligand contact to Zn(2+).

The protein belongs to the peptidase M28 family. M28E subfamily. In terms of assembly, monomer. The cofactor is Zn(2+).

The protein resides in the secreted. In terms of biological role, extracellular aminopeptidase that allows assimilation of proteinaceous substrates. The chain is Leucine aminopeptidase 1 (lap1) from Trichoderma harzianum (Hypocrea lixii).